The following is a 91-amino-acid chain: Large ribosomal subunit protein uL23 (91 aa).

It belongs to the universal ribosomal protein uL23 family. In terms of assembly, part of the 50S ribosomal subunit. Contacts protein L29, and trigger factor when it is bound to the ribosome.

Its function is as follows. One of the early assembly proteins it binds 23S rRNA. One of the proteins that surrounds the polypeptide exit tunnel on the outside of the ribosome. Forms the main docking site for trigger factor binding to the ribosome. The sequence is that of Large ribosomal subunit protein uL23 from Macrococcus caseolyticus (strain JCSC5402) (Macrococcoides caseolyticum).